The chain runs to 296 residues: MNQEQFDKIKNGKGFIAALDQSGGSTPKALKDYGVEENEYSNDEEMFNLVHDMRTRIITSPAFNGEKILGAILFEQTMDREVEGKYTGSYLADKGIVPFLKVDKGLAEEADGVQLMKPIPDLDKLLDRANERGIFGTKMRSNILENNKEAIEKVVKQQFEVAKEIIAAGLVPIIEPEVNINAKDKEAIEANLAEAIKAELDNLKKDQYVMLKLTIPTKVNAYSELIEHPQVIRVVALSGGYSRDEANKILKQNDGLIASFSRALVSDLNAQQSDAEFNEKLQEAIDTIFDASVNKA.

The active-site Proton acceptor is the Glu-175. Lys-212 serves as the catalytic Schiff-base intermediate with dihydroxyacetone-P.

Belongs to the class I fructose-bisphosphate aldolase family.

It catalyses the reaction beta-D-fructose 1,6-bisphosphate = D-glyceraldehyde 3-phosphate + dihydroxyacetone phosphate. Its pathway is carbohydrate degradation; glycolysis; D-glyceraldehyde 3-phosphate and glycerone phosphate from D-glucose: step 4/4. The chain is Fructose-bisphosphate aldolase class 1 (fda) from Staphylococcus carnosus (strain TM300).